The primary structure comprises 261 residues: tRNA pseudouridine synthase A (261 aa).

Residue Asp-51 is the Nucleophile of the active site. Position 109 (Tyr-109) interacts with substrate.

It belongs to the tRNA pseudouridine synthase TruA family. In terms of assembly, homodimer.

It catalyses the reaction uridine(38/39/40) in tRNA = pseudouridine(38/39/40) in tRNA. Functionally, formation of pseudouridine at positions 38, 39 and 40 in the anticodon stem and loop of transfer RNAs. This Shewanella sediminis (strain HAW-EB3) protein is tRNA pseudouridine synthase A.